A 459-amino-acid polypeptide reads, in one-letter code: MSAGNIVEIIGAVVDVEFPRDAVPNVYDALRVEDSGLTLEVQQQLGDGVVRTIAMGSTDGMRRGVTVANTGAPISVPVGKGTLGRVMDVLGNPVDNAGDVQTEERWSIHRPAPSFDEQAGSTELLETGIKVIDLLCPFAKGGKVGLFGGAGVGKTVNMMELIRNIAIEHSGYSVFAGVGERTREGNDFYHEMKDSNVLDKVALVYGQMNEPPGNRLRVALTGLTMAEFFRDEGRDVLMFIDNIYRYTLAGTEVSALLGRMPSAVGYQPTLAEEMGVLQERITSTKKGSITSIQAVYVPADDLTDPSPATTFAHLDATVVLSRQIAELGIYPAVDPLDSTSRQLDPQVIGNEHYDTARAVQNTLQRYKELKDIIAILGMDELSEDDKLIVARARKIQRFLSQPFFVAEVFTGAPGKYVSLKDTIRGFQAIVAGEYDHLPEQAFYMVGTIDEAVEKAGKLK.

ATP is bound at residue 148 to 155; the sequence is GGAGVGKT.

It belongs to the ATPase alpha/beta chains family. In terms of assembly, F-type ATPases have 2 components, CF(1) - the catalytic core - and CF(0) - the membrane proton channel. CF(1) has five subunits: alpha(3), beta(3), gamma(1), delta(1), epsilon(1). CF(0) has three main subunits: a(1), b(2) and c(9-12). The alpha and beta chains form an alternating ring which encloses part of the gamma chain. CF(1) is attached to CF(0) by a central stalk formed by the gamma and epsilon chains, while a peripheral stalk is formed by the delta and b chains.

The protein localises to the cell inner membrane. It carries out the reaction ATP + H2O + 4 H(+)(in) = ADP + phosphate + 5 H(+)(out). Its function is as follows. Produces ATP from ADP in the presence of a proton gradient across the membrane. The catalytic sites are hosted primarily by the beta subunits. The protein is ATP synthase subunit beta of Thioalkalivibrio sulfidiphilus (strain HL-EbGR7).